The primary structure comprises 913 residues: DNA mismatch repair protein MutS (913 aa).

720–727 (GPNASGKS) is a binding site for ATP.

The protein belongs to the DNA mismatch repair MutS family.

Functionally, this protein is involved in the repair of mismatches in DNA. It is possible that it carries out the mismatch recognition step. This protein has a weak ATPase activity. The polypeptide is DNA mismatch repair protein MutS (Prochlorococcus marinus (strain AS9601)).